The primary structure comprises 603 residues: Putative lipase atg15 (603 aa).

The Cytoplasmic segment spans residues 1-20 (MDQPHRRTRKWHLMDLSVST). A helical; Signal-anchor for type II membrane protein transmembrane segment spans residues 21-41 (LLMSLALVLPSCVSAYQPVYF). Over 42–603 (RSQEATPFIP…ITPAPILIDL (562 aa)) the chain is Lumenal. Residues N166, N201, N223, N281, and N305 are each glycosylated (N-linked (GlcNAc...) asparagine). S321 serves as the catalytic Charge relay system. A glycan (N-linked (GlcNAc...) asparagine) is linked at N467.

The protein belongs to the AB hydrolase superfamily. Lipase family. Binds to both phosphatidylinositol (PI) and phosphatidylinositol 3,5-bisphosphate (PIP2).

It is found in the endosome. The protein resides in the multivesicular body membrane. Its subcellular location is the prevacuolar compartment membrane. The enzyme catalyses a triacylglycerol + H2O = a diacylglycerol + a fatty acid + H(+). Lipase which is essential for lysis of subvacuolar cytoplasm to vacuole targeted bodies and intravacuolar autophagic bodies. Involved in the lysis of intravacuolar multivesicular body (MVB) vesicles. The intravacuolar membrane disintegration by atg15 is critical to life span extension. In Emericella nidulans (strain FGSC A4 / ATCC 38163 / CBS 112.46 / NRRL 194 / M139) (Aspergillus nidulans), this protein is Putative lipase atg15 (atg15).